Consider the following 57-residue polypeptide: Large ribosomal subunit protein bL33 (57 aa).

This sequence belongs to the bacterial ribosomal protein bL33 family.

The chain is Large ribosomal subunit protein bL33 from Akkermansia muciniphila (strain ATCC BAA-835 / DSM 22959 / JCM 33894 / BCRC 81048 / CCUG 64013 / CIP 107961 / Muc).